The chain runs to 238 residues: Glycerol-3-phosphate acyltransferase (238 aa).

Helical transmembrane passes span 5 to 25, 61 to 81, 88 to 108, 125 to 145, 149 to 169, and 194 to 214; these read VIFG…SINF, FLVF…SAIL, FGAV…VFPI, IASL…AMIF, IVSL…IIPW, and AWYL…FTHI.

It belongs to the PlsY family. Probably interacts with PlsX.

It localises to the cell membrane. The enzyme catalyses an acyl phosphate + sn-glycerol 3-phosphate = a 1-acyl-sn-glycero-3-phosphate + phosphate. The protein operates within lipid metabolism; phospholipid metabolism. Catalyzes the transfer of an acyl group from acyl-phosphate (acyl-PO(4)) to glycerol-3-phosphate (G3P) to form lysophosphatidic acid (LPA). This enzyme utilizes acyl-phosphate as fatty acyl donor, but not acyl-CoA or acyl-ACP. The chain is Glycerol-3-phosphate acyltransferase from Mycoplasma mobile (strain ATCC 43663 / 163K / NCTC 11711) (Mesomycoplasma mobile).